Here is a 196-residue protein sequence, read N- to C-terminus: MNEAVSPSALSTLFTDARTHNGWRETPVSDETLRELYALMKWGPTSANCSPARIVFIRTAEGKERLRPALSSGNLQKTLTAPVTAIVAWDSEFYERLPQLFPHGDARSWFTSSPQLAEETAFRNSSMQAAYLIIACRALGLDTGPMSGFDRQHVDDAFFAVSTLKSNLLINIGYGDSSKLFARLPRLSFEEACGLL.

Belongs to the nitroreductase family. HadB/RutE subfamily. It depends on FMN as a cofactor.

It carries out the reaction 3-hydroxypropanoate + NADP(+) = 3-oxopropanoate + NADPH + H(+). Its function is as follows. May reduce toxic product malonic semialdehyde to 3-hydroxypropionic acid, which is excreted. The chain is Probable malonic semialdehyde reductase RutE from Shigella dysenteriae serotype 1 (strain Sd197).